The primary structure comprises 120 residues: Ribonuclease P protein component 4 (120 aa).

Positions 67, 70, 96, and 99 each coordinate Zn(2+).

The protein belongs to the eukaryotic/archaeal RNase P protein component 4 family. Consists of a catalytic RNA component and at least 4-5 protein subunits. Requires Zn(2+) as cofactor.

The protein resides in the cytoplasm. It catalyses the reaction Endonucleolytic cleavage of RNA, removing 5'-extranucleotides from tRNA precursor.. Part of ribonuclease P, a protein complex that generates mature tRNA molecules by cleaving their 5'-ends. This Thermococcus sibiricus (strain DSM 12597 / MM 739) protein is Ribonuclease P protein component 4.